The sequence spans 631 residues: MPAGRGRPLRAADMKKDVRILLVGEPRVGKTSLIMSLVSEEFPEEVPPRAEEITIPADVTPERVPTHIVDYSEAEQSDEQLHQEISQANVICIVYAVNNKHSIDKVTSRWIPLINERTDKDSRLPLILVGNKSDLVEYSSMETILPIMNQYTEIETCVECSAKNLKNISELFYYAQKAVLHPTGPLYCPEEKEMKPACIKALTRIFKISDQDNDGTLNDAELNFFQRICFNTPLAPQALEDVKNVVRKHISDGVADGGLTLKGFLFLHTLFIQRGRHETTWTVLRRFGYDDDLDLTPEYLFPLLKIPPDCTTELNHHAYLFLQSTFDKHDLDRDCALSPDELKDLFKVFPYIPWGPDVNNTVCTNEKGWITYQGFLSQWTLTTYLDVQRCLEYLGYLGYSILTEQESQASAITVTRDKKIDLQKKQTQRNVFRCNVIGMKNCGKSGVLQALLGRNLTRQKKIRDDHKSYYAINTVYVYGQEKYLLLHDISESEFLTEAEILCDVVCLVYDVSNPKSFEYCARIFKQHFMDSRIPCLIVAAKSDLHEVKQEYSISPTDFCRKHKMPPPQAFTCNTADAPSKDIFVKLTTMAMYPHVTQADLKSSTFWLRASFGATVFAVLGFAMYKALLKQR.

Topologically, residues 1–605 (MPAGRGRPLR…TQADLKSSTF (605 aa)) are cytoplasmic. The 167-residue stretch at 15–181 (KKDVRILLVG…FYYAQKAVLH (167 aa)) folds into the Miro 1 domain. GTP is bound by residues arginine 27, glycine 29, lysine 30, threonine 31, and serine 32. Residue threonine 31 coordinates Mg(2+). Mg(2+) is bound by residues proline 48 and aspartate 70. GTP is bound at residue serine 72. Lysine 105 carries the post-translational modification N6-acetyllysine. Residues asparagine 131, lysine 132, aspartate 134, alanine 162, and lysine 163 each contribute to the GTP site. Residue lysine 166 forms a Glycyl lysine isopeptide (Lys-Gly) (interchain with G-Cter in ubiquitin) linkage. One can recognise an EF-hand 1 domain in the interval 197 to 232 (ACIKALTRIFKISDQDNDGTLNDAELNFFQRICFNT). The Ca(2+) site is built by aspartate 210, aspartate 212, aspartate 214, threonine 216, and glutamate 221. A Glycyl lysine isopeptide (Lys-Gly) (interchain with G-Cter in ubiquitin) cross-link involves residue lysine 248. In terms of domain architecture, EF-hand 2 spans 317–352 (HAYLFLQSTFDKHDLDRDCALSPDELKDLFKVFPYI). Residues aspartate 330, aspartate 332, aspartate 334, alanine 336, and glutamate 341 each contribute to the Ca(2+) site. Positions 429-592 (RNVFRCNVIG…FVKLTTMAMY (164 aa)) constitute a Miro 2 domain. GTP is bound by residues asparagine 441, cysteine 442, glycine 443, lysine 444, serine 445, glycine 446, lysine 460, lysine 541, aspartate 543, threonine 571, and cysteine 572. Asparagine 441 contributes to the Mg(2+) binding site. Lysine 585 participates in a covalent cross-link: Glycyl lysine isopeptide (Lys-Gly) (interchain with G-Cter in ubiquitin). A helical; Anchor for type IV membrane protein membrane pass occupies residues 606-628 (WLRASFGATVFAVLGFAMYKALL). Residues 629-631 (KQR) are Mitochondrial intermembrane-facing.

Belongs to the mitochondrial Rho GTPase family. In terms of assembly, homodimer. Interacts with the kinesin-binding proteins TRAK1/OIP106 and TRAK2/GRIF1, forming a link between mitochondria and the trafficking apparatus of the microtubules. Interacts with RAP1GDS1. Interacts with ARMCX1. Found in a complex with KIF5B, OGT, RHOT2 and TRAK1. In terms of processing, ubiquitinated by PRKN during mitophagy, leading to its degradation and enhancement of mitophagy. Deubiquitinated by USP30. Acetylation on Lys-105 decreases sensitivity of mitochondrial transport to elevated Ca(2+) levels, increases mitochondrial transport and promotes axon growth. Deacetylated by HDAC6 which blocks mitochondrial transport and mediates axon growth inhibition.

It is found in the mitochondrion outer membrane. It carries out the reaction GTP + H2O = GDP + phosphate + H(+). It catalyses the reaction ATP + H2O = ADP + phosphate + H(+). The catalysed reaction is UTP + H2O = UDP + phosphate + H(+). Functionally, atypical mitochondrial nucleoside-triphosphatase (NTPase) involved in mitochondrial trafficking. Probably involved in control of anterograde transport of mitochondria and their subcellular distribution. Promotes mitochondrial fission during high calcium conditions. Can hydrolyze GTP, ATP and UTP. The chain is Mitochondrial Rho GTPase 1 (RHOT1) from Bos taurus (Bovine).